A 219-amino-acid chain; its full sequence is Octanoyltransferase (219 aa).

The BPL/LPL catalytic domain maps to 32–207; the sequence is SSSPDQLWIV…TFSHNLGYQN (176 aa). Substrate contacts are provided by residues 71-78, 138-140, and 151-153; these read RGGQVTYH, SLG, and GLA. C169 (acyl-thioester intermediate) is an active-site residue.

It belongs to the LipB family.

Its subcellular location is the cytoplasm. It catalyses the reaction octanoyl-[ACP] + L-lysyl-[protein] = N(6)-octanoyl-L-lysyl-[protein] + holo-[ACP] + H(+). The protein operates within protein modification; protein lipoylation via endogenous pathway; protein N(6)-(lipoyl)lysine from octanoyl-[acyl-carrier-protein]: step 1/2. In terms of biological role, catalyzes the transfer of endogenously produced octanoic acid from octanoyl-acyl-carrier-protein onto the lipoyl domains of lipoate-dependent enzymes. Lipoyl-ACP can also act as a substrate although octanoyl-ACP is likely to be the physiological substrate. In Shewanella woodyi (strain ATCC 51908 / MS32), this protein is Octanoyltransferase.